We begin with the raw amino-acid sequence, 297 residues long: Acetyl-coenzyme A carboxylase carboxyl transferase subunit beta (297 aa).

Residues 27 to 296 enclose the CoA carboxyltransferase N-terminal domain; sequence LWHKCPSCEA…PEAAKEVAAV (270 aa). C31, C34, C50, and C53 together coordinate Zn(2+). Residues 31–53 form a C4-type zinc finger; sequence CPSCEAVLYRPELEKTLDVCPKC.

Belongs to the AccD/PCCB family. In terms of assembly, acetyl-CoA carboxylase is a heterohexamer composed of biotin carboxyl carrier protein (AccB), biotin carboxylase (AccC) and two subunits each of ACCase subunit alpha (AccA) and ACCase subunit beta (AccD). Zn(2+) is required as a cofactor.

Its subcellular location is the cytoplasm. The catalysed reaction is N(6)-carboxybiotinyl-L-lysyl-[protein] + acetyl-CoA = N(6)-biotinyl-L-lysyl-[protein] + malonyl-CoA. It participates in lipid metabolism; malonyl-CoA biosynthesis; malonyl-CoA from acetyl-CoA: step 1/1. Its function is as follows. Component of the acetyl coenzyme A carboxylase (ACC) complex. Biotin carboxylase (BC) catalyzes the carboxylation of biotin on its carrier protein (BCCP) and then the CO(2) group is transferred by the transcarboxylase to acetyl-CoA to form malonyl-CoA. This Pseudomonas entomophila (strain L48) protein is Acetyl-coenzyme A carboxylase carboxyl transferase subunit beta.